A 160-amino-acid chain; its full sequence is Ribosomal RNA large subunit methyltransferase H (160 aa).

Residues G108 and 127–132 (FGLMTW) contribute to the S-adenosyl-L-methionine site.

This sequence belongs to the RNA methyltransferase RlmH family. As to quaternary structure, homodimer.

The protein resides in the cytoplasm. It carries out the reaction pseudouridine(1915) in 23S rRNA + S-adenosyl-L-methionine = N(3)-methylpseudouridine(1915) in 23S rRNA + S-adenosyl-L-homocysteine + H(+). In terms of biological role, specifically methylates the pseudouridine at position 1915 (m3Psi1915) in 23S rRNA. The protein is Ribosomal RNA large subunit methyltransferase H of Bartonella bacilliformis (strain ATCC 35685 / KC583 / Herrer 020/F12,63).